The sequence spans 280 residues: Large ribosomal subunit protein uL2 (280 aa).

The interval 213-280 (RWKGKRPSVR…RRRTGKKHAR (68 aa)) is disordered. The segment covering 268 to 280 (IVRRRRTGKKHAR) has biased composition (basic residues).

The protein belongs to the universal ribosomal protein uL2 family. As to quaternary structure, part of the 50S ribosomal subunit. Forms a bridge to the 30S subunit in the 70S ribosome.

Its function is as follows. One of the primary rRNA binding proteins. Required for association of the 30S and 50S subunits to form the 70S ribosome, for tRNA binding and peptide bond formation. It has been suggested to have peptidyltransferase activity; this is somewhat controversial. Makes several contacts with the 16S rRNA in the 70S ribosome. The sequence is that of Large ribosomal subunit protein uL2 from Mycobacterium leprae (strain Br4923).